We begin with the raw amino-acid sequence, 338 residues long: Ferrochelatase (338 aa).

Residues His-202 and Glu-283 each coordinate Fe cation.

This sequence belongs to the ferrochelatase family.

It localises to the cytoplasm. It catalyses the reaction heme b + 2 H(+) = protoporphyrin IX + Fe(2+). Its pathway is porphyrin-containing compound metabolism; protoheme biosynthesis; protoheme from protoporphyrin-IX: step 1/1. Catalyzes the ferrous insertion into protoporphyrin IX. The chain is Ferrochelatase from Acinetobacter baumannii (strain AB307-0294).